Here is a 347-residue protein sequence, read N- to C-terminus: MNEFMKKFSLTKPIIQAPMAGGITKPRLASAVSNQGALGSLASGYLTPDLLEQQIKEIFELTDAPFQINVFVPLGLEMPPKDQIKKWKENIPLANQVNQFTSVQEEWDDFYQKIDLILKYKVKACSFTFDLPPEDAVKELKTAGCCLIGTASTVEEALLMEERGMDIVVLQGSEAGGHRGAFLPSKGESAVGLMALIPQAADALSVPVIAAGGMIDHRGVKAALTLGAQGVQIGSAFLICHESNAHPVHKQKILEANEADTKLTTLFSGKEARGIVNKWMEENEQFETQTLPYPYQNTLTKAMRQKASLQNNHDQMSLWAGQGIRSLTEEISVKQLLNQLCQEDIKI.

FMN contacts are provided by residues Asn-69, Gln-171, Gly-176, Gly-213, and 232–235 (QIGS).

This sequence belongs to the nitronate monooxygenase family. NMO class I subfamily. The cofactor is FMN.

The enzyme catalyses 3 propionate 3-nitronate + 3 O2 + H2O = 3 3-oxopropanoate + 2 nitrate + nitrite + H2O2 + 3 H(+). Nitronate monooxygenase that uses molecular oxygen to catalyze the oxidative denitrification of alkyl nitronates. Acts on propionate 3-nitronate (P3N), the presumed physiological substrate. Probably functions in the detoxification of P3N, a metabolic poison produced by plants and fungi as a defense mechanism. This chain is Probable nitronate monooxygenase (yrpB), found in Bacillus subtilis (strain 168).